The primary structure comprises 209 residues: Kynurenine formamidase (209 aa).

W20 contributes to the substrate binding site. 3 residues coordinate Zn(2+): H50, H54, and D56. The active-site Proton donor/acceptor is the H60. Zn(2+) is bound by residues H161 and E173.

It belongs to the Cyclase 1 superfamily. KynB family. As to quaternary structure, homodimer. Requires Zn(2+) as cofactor.

It carries out the reaction N-formyl-L-kynurenine + H2O = L-kynurenine + formate + H(+). It participates in amino-acid degradation; L-tryptophan degradation via kynurenine pathway; L-kynurenine from L-tryptophan: step 2/2. Catalyzes the hydrolysis of N-formyl-L-kynurenine to L-kynurenine, the second step in the kynurenine pathway of tryptophan degradation. The sequence is that of Kynurenine formamidase from Bacillus anthracis.